A 106-amino-acid chain; its full sequence is Cell division protein FtsB (106 aa).

Topologically, residues 1–3 (MGK) are cytoplasmic. Residues 4 to 21 (LTLLLLVLLGWLQYSLWL) form a helical membrane-spanning segment. Over 22–106 (GKNGIHDYVR…SRPSTPNNTQ (85 aa)) the chain is Periplasmic. Residues 29 to 70 (YVRVKNDVAMQERNNSKLKARNDQLSAEIDDLTGGQEAIEER) are a coiled coil.

This sequence belongs to the FtsB family. As to quaternary structure, part of a complex composed of FtsB, FtsL and FtsQ.

It localises to the cell inner membrane. Its function is as follows. Essential cell division protein. May link together the upstream cell division proteins, which are predominantly cytoplasmic, with the downstream cell division proteins, which are predominantly periplasmic. The polypeptide is Cell division protein FtsB (Photorhabdus laumondii subsp. laumondii (strain DSM 15139 / CIP 105565 / TT01) (Photorhabdus luminescens subsp. laumondii)).